Reading from the N-terminus, the 324-residue chain is Aspartate carbamoyltransferase catalytic subunit (324 aa).

Carbamoyl phosphate is bound by residues Arg-65 and Thr-66. L-aspartate is bound at residue Lys-93. Carbamoyl phosphate contacts are provided by Arg-115, His-145, and Gln-148. L-aspartate is bound by residues Arg-178 and Arg-233. Carbamoyl phosphate-binding residues include Gly-274 and Pro-275.

It belongs to the aspartate/ornithine carbamoyltransferase superfamily. ATCase family. As to quaternary structure, heterododecamer (2C3:3R2) of six catalytic PyrB chains organized as two trimers (C3), and six regulatory PyrI chains organized as three dimers (R2).

It carries out the reaction carbamoyl phosphate + L-aspartate = N-carbamoyl-L-aspartate + phosphate + H(+). It functions in the pathway pyrimidine metabolism; UMP biosynthesis via de novo pathway; (S)-dihydroorotate from bicarbonate: step 2/3. Its function is as follows. Catalyzes the condensation of carbamoyl phosphate and aspartate to form carbamoyl aspartate and inorganic phosphate, the committed step in the de novo pyrimidine nucleotide biosynthesis pathway. In Nitrosococcus oceani (strain ATCC 19707 / BCRC 17464 / JCM 30415 / NCIMB 11848 / C-107), this protein is Aspartate carbamoyltransferase catalytic subunit.